The following is a 179-amino-acid chain: Adenine phosphoribosyltransferase (179 aa).

Belongs to the purine/pyrimidine phosphoribosyltransferase family. As to quaternary structure, homodimer.

The protein resides in the cytoplasm. It carries out the reaction AMP + diphosphate = 5-phospho-alpha-D-ribose 1-diphosphate + adenine. Its pathway is purine metabolism; AMP biosynthesis via salvage pathway; AMP from adenine: step 1/1. Catalyzes a salvage reaction resulting in the formation of AMP, that is energically less costly than de novo synthesis. The protein is Adenine phosphoribosyltransferase of Mycolicibacterium gilvum (strain PYR-GCK) (Mycobacterium gilvum (strain PYR-GCK)).